Here is a 440-residue protein sequence, read N- to C-terminus: Chromosome partition protein MukF (440 aa).

A leucine-zipper region spans residues 208–236; the sequence is LSETSGTLRELQDTLEAAGDKLQANLLRI.

It belongs to the MukF family. In terms of assembly, interacts, and probably forms a ternary complex, with MukE and MukB via its C-terminal region. The complex formation is stimulated by calcium or magnesium. It is required for an interaction between MukE and MukB.

The protein localises to the cytoplasm. Its subcellular location is the nucleoid. In terms of biological role, involved in chromosome condensation, segregation and cell cycle progression. May participate in facilitating chromosome segregation by condensation DNA from both sides of a centrally located replisome during cell division. Not required for mini-F plasmid partitioning. Probably acts via its interaction with MukB and MukE. Overexpression results in anucleate cells. It has a calcium binding activity. The polypeptide is Chromosome partition protein MukF (Photorhabdus laumondii subsp. laumondii (strain DSM 15139 / CIP 105565 / TT01) (Photorhabdus luminescens subsp. laumondii)).